Here is a 217-residue protein sequence, read N- to C-terminus: Aprataxin-like protein (217 aa).

The HIT domain maps to 6-139 (ALKNYVTSPE…HIHVISKDFH (134 aa)). Interaction with DNA stretches follow at residues 34–38 (DSFPK), 121–132 (HSVPSMANLHIH), and 144–148 (KNKKH). H130 acts as the Nucleophile in catalysis. C188, C191, H205, and E209 together coordinate Zn(2+).

The protein localises to the nucleus. It is found in the cytoplasm. It catalyses the reaction a 5'-end adenosine-5'-diphospho-5'-2'-deoxyribonucleoside-DNA + H2O = a 5'-end 5'-phospho-2'-deoxyribonucleoside-DNA + AMP + 2 H(+). It carries out the reaction a 5'-end adenosine-5'-diphospho-5'-ribonucleoside-2'-deoxyribonucleotide-DNA + H2O = a 5'-end 5'-phospho-ribonucleoside-2'-deoxyribonucleotide-DNA + AMP + 2 H(+). The enzyme catalyses a 3'-end 2'-deoxyribonucleotide-3'-diphospho-5'-guanosine-DNA + H2O = a 3'-end 2'-deoxyribonucleotide 3'-phosphate-DNA + GMP + 2 H(+). Its function is as follows. DNA-binding protein involved in single-strand DNA break repair, double-strand DNA break repair and base excision repair. Resolves abortive DNA ligation intermediates formed either at base excision sites, or when DNA ligases attempt to repair non-ligatable breaks induced by reactive oxygen species. Catalyzes the release of adenylate groups covalently linked to 5'-phosphate termini, resulting in the production of 5'-phosphate termini that can be efficiently rejoined. Likewise, catalyzes the release of 3'-linked guanosine (DNAppG) and inosine (DNAppI) from DNA, but has higher specific activity with 5'-linked adenosine (AppDNA). The chain is Aprataxin-like protein (HNT3) from Saccharomyces cerevisiae (strain ATCC 204508 / S288c) (Baker's yeast).